The chain runs to 341 residues: THO complex subunit 6 (341 aa).

WD repeat units follow at residues 22–61, 74–112, 124–165, 166–205, 215–254, 256–293, and 295–339; these read RLHM…SSEA, AHDG…GCKE, LEVP…RVLR, GHTD…EVQT, SRPH…PTTI, PIRA…KAQV, and GSSP…AFSL. A Phosphoserine modification is found at Ser-180.

This sequence belongs to the WD repeat THOC6 family. In terms of assembly, component of the THO subcomplex, which is composed of THOC1, THOC2, THOC3, THOC5, THOC6 and THOC7. The THO subcomplex interacts with DDX39B to form the THO-DDX39B complex which multimerizes into a 28-subunit tetrameric assembly. Component of the transcription/export (TREX) complex at least composed of ALYREF/THOC4, DDX39B, SARNP/CIP29, CHTOP and the THO subcomplex; in the complex interacts with THOC5; together with THOC5 and THOC7, plays a key structural role in the oligomerization of the THO-DDX39B complex. TREX seems to have a dynamic structure involving ATP-dependent remodeling.

The protein localises to the nucleus. It is found in the nucleus speckle. Component of the THO subcomplex of the TREX complex which is thought to couple mRNA transcription, processing and nuclear export, and which specifically associates with spliced mRNA and not with unspliced pre-mRNA. Plays a key structural role in the oligomerization of the THO-DDX39B complex. TREX is recruited to spliced mRNAs by a transcription-independent mechanism, binds to mRNA upstream of the exon-junction complex (EJC) and is recruited in a splicing- and cap-dependent manner to a region near the 5' end of the mRNA where it functions in mRNA export to the cytoplasm via the TAP/NXF1 pathway. Plays a role in apoptosis negative control involved in brain development. Its function is as follows. (Microbial infection) The TREX complex is essential for the export of Kaposi's sarcoma-associated herpesvirus (KSHV) intronless mRNAs and infectious virus production. The polypeptide is THO complex subunit 6 (THOC6) (Homo sapiens (Human)).